The sequence spans 749 residues: MFKRTIPLFAAFTLAISPSIFPNYAHAQEDKPKTNQYWWPKMLDLSPLRQPNATSNPMGEKFNYAEEFNSLDLNAVIEDLKKLMTTSQDWWPADYGNYGPLFIRMSWHAAGTYRIYDGRGGANGGFQRFAPQNSWPDNANLDKARRLLWPIKQKYGRKISWADLLVLAGNVAMESMGFKTIGFAGGREDAWEAININWGPEGKWLESKRQDKDGKLEKPLAATVMGLIYVNPEGPNGVPDPLAAAEKIRETFGRMAMNDEETVALIAGGHAFGKTHGAASGKYLGPAPEAAGIEEQGFGWKNSYGSGKGKDTITSGLEGAWTVTPTHWSHNYLQNLFNFNWVKTKSPGGAIQWVPENSNASSMVPDAFDPSKRHAPVMLTTDLALKFDPVYSKIAKRFLDNPKEFDDAFARAWFKLIHRDMGPRSRYLGSLVPKEAMIWQDPVPPVDYKLVDANDIANLKGKILNSGLTTSELVKTAWASASTFRGTDMRGGANGARIRLAPQKDWPANDPQELAKVLKTLESIQNNFNNAQADGKKISLADLIVLGGNAAIEQAAKQAGYDIIVPFTPGRTDATQGMTDVKSFEVLEPKADGFRNYFDKSNNMSPPEMLVEKASLLKLSVPEMTVLVGGMRVLNANTGQNQYGVFTDKPGTLNNDFFINLLSMSTEWKKSSETEGIYEGYERKTGKLKWKATSVDLIFGANSELRAVAEAYATDDAKEKFIQDFINAWVKVMTADRFDIKAANANINS.

The signal sequence occupies residues methionine 1–alanine 27. Positions tryptophan 107–tyrosine 229 form a cross-link, tryptophyl-tyrosyl-methioninium (Trp-Tyr) (with M-255). The Proton acceptor role is filled by histidine 108. A cross-link (tryptophyl-tyrosyl-methioninium (Tyr-Met) (with W-107)) is located at residues tyrosine 229–methionine 255. Histidine 270 contacts heme b.

It belongs to the peroxidase family. Peroxidase/catalase subfamily. Homodimer or homotetramer. Heme b serves as cofactor. Post-translationally, formation of the three residue Trp-Tyr-Met cross-link is important for the catalase, but not the peroxidase activity of the enzyme.

It carries out the reaction H2O2 + AH2 = A + 2 H2O. The enzyme catalyses 2 H2O2 = O2 + 2 H2O. Functionally, bifunctional enzyme with both catalase and broad-spectrum peroxidase activity. The polypeptide is Catalase-peroxidase 2 (Legionella pneumophila subsp. pneumophila (strain Philadelphia 1 / ATCC 33152 / DSM 7513)).